The following is a 274-amino-acid chain: MEWSQELWLLIKYLLLGLFQGFTEPIPVSSSGHLVLLQHFLGIEIEGLSFEVMVNFASLFAVIAIYRFDLLKLVKGSARYVLYQDAQGKGDFRISFYLLLATVPAVLAALLFKDWIETELKQLHVIAFALLITGMALWLIRHLNGRKQDGDITLKDALLVGLAQTAALIPGISRSGATIVAAMGLGWRQETALRFSFFLYIPISLGSGVLAISDIVQDPHFTALWIPYTIAFIGSFIASYVSLLWFMNIMRHGKLIYFALYCWLAGLIVLSLLS.

The next 7 helical transmembrane spans lie at 8–28 (WLLI…PIPV), 45–65 (IEGL…VIAI), 92–112 (FRIS…ALLF), 120–140 (LKQL…LWLI), 195–215 (FSFF…ISDI), 230–250 (IAFI…MNIM), and 253–273 (GKLI…LSLL).

The protein belongs to the UppP family.

It is found in the cell membrane. The enzyme catalyses di-trans,octa-cis-undecaprenyl diphosphate + H2O = di-trans,octa-cis-undecaprenyl phosphate + phosphate + H(+). Catalyzes the dephosphorylation of undecaprenyl diphosphate (UPP). Confers resistance to bacitracin. In Halalkalibacterium halodurans (strain ATCC BAA-125 / DSM 18197 / FERM 7344 / JCM 9153 / C-125) (Bacillus halodurans), this protein is Undecaprenyl-diphosphatase 1.